Consider the following 465-residue polypeptide: Ran-binding protein 3-like (465 aa).

A RanBD1 domain is found at 276–417 (SQPSRKCLLE…ALQSFNKQRD (142 aa)).

In terms of assembly, interacts with SMAD1, SMAD5 and SMAD8; the interaction (with SMAD at least) increases when SMAD1 is not phosphorylated and mediates SMAD1 nuclear export.

It is found in the nucleus. The protein localises to the cytoplasm. Functionally, nuclear export factor for BMP-specific SMAD1/5/8 that plays a critical role in terminating BMP signaling and regulating mesenchymal stem cell differentiation by blocking osteoblast differentiation to promote myogenic differention. Directly recognizes dephosphorylated SMAD1/5/8 and mediates their nuclear export in a Ran-dependent manner. The polypeptide is Ran-binding protein 3-like (RANBP3L) (Homo sapiens (Human)).